The sequence spans 86 residues: Large ribosomal subunit protein uL23 (86 aa).

Belongs to the universal ribosomal protein uL23 family. Part of the 50S ribosomal subunit. Contacts protein L29.

In terms of biological role, binds to 23S rRNA. One of the proteins that surrounds the polypeptide exit tunnel on the outside of the ribosome. This Methanosphaera stadtmanae (strain ATCC 43021 / DSM 3091 / JCM 11832 / MCB-3) protein is Large ribosomal subunit protein uL23.